We begin with the raw amino-acid sequence, 97 residues long: DNA/RNA-binding protein Alba (97 aa).

Lys15 is subject to N6-acetyllysine.

Belongs to the histone-like Alba family. Acetylated. Acetylation at Lys-15 decreases DNA-binding affinity.

The protein localises to the cytoplasm. Its subcellular location is the chromosome. Its function is as follows. Binds double-stranded DNA tightly but without sequence specificity. Involved in DNA compaction. This is DNA/RNA-binding protein Alba from Ignicoccus hospitalis (strain KIN4/I / DSM 18386 / JCM 14125).